The primary structure comprises 51 residues: Large ribosomal subunit protein eL39 (51 aa).

The protein belongs to the eukaryotic ribosomal protein eL39 family.

The polypeptide is Large ribosomal subunit protein eL39 (Methanococcoides burtonii (strain DSM 6242 / NBRC 107633 / OCM 468 / ACE-M)).